The primary structure comprises 549 residues: Glucose-6-phosphate isomerase (549 aa).

Catalysis depends on Glu-355, which acts as the Proton donor. Catalysis depends on residues His-386 and Lys-514.

This sequence belongs to the GPI family.

It is found in the cytoplasm. It carries out the reaction alpha-D-glucose 6-phosphate = beta-D-fructose 6-phosphate. It functions in the pathway carbohydrate biosynthesis; gluconeogenesis. Its pathway is carbohydrate degradation; glycolysis; D-glyceraldehyde 3-phosphate and glycerone phosphate from D-glucose: step 2/4. In terms of biological role, catalyzes the reversible isomerization of glucose-6-phosphate to fructose-6-phosphate. The protein is Glucose-6-phosphate isomerase of Salmonella schwarzengrund (strain CVM19633).